Here is a 102-residue protein sequence, read N- to C-terminus: 10 kDa heat shock protein, mitochondrial (102 aa).

Position 2 is an N-acetylalanine (alanine 2). Lysine 8 carries the post-translational modification N6-acetyllysine. Lysine 28 is modified (N6-succinyllysine). Lysine 40 is subject to N6-acetyllysine; alternate. N6-malonyllysine; alternate is present on residues lysine 40, lysine 54, and lysine 56. N6-succinyllysine; alternate is present on residues lysine 40, lysine 54, lysine 56, lysine 66, and lysine 70. 3 positions are modified to N6-acetyllysine; alternate: lysine 56, lysine 66, and lysine 70. Phosphothreonine is present on threonine 79. Residues lysine 80 and lysine 86 each carry the N6-acetyllysine; alternate modification. Lysine 80 and lysine 86 each carry N6-succinyllysine; alternate. Lysine 99 is subject to N6-acetyllysine.

Belongs to the GroES chaperonin family. Homoheptamer arranged in a ring structure. 2 heptameric Hsp10 rings interact with a Hsp60 tetradecamer in the structure of a back-to-back double heptameric ring to form the symmetrical football complex.

Its subcellular location is the mitochondrion matrix. In terms of biological role, co-chaperonin implicated in mitochondrial protein import and macromolecular assembly. Together with Hsp60, facilitates the correct folding of imported proteins. May also prevent misfolding and promote the refolding and proper assembly of unfolded polypeptides generated under stress conditions in the mitochondrial matrix. The functional units of these chaperonins consist of heptameric rings of the large subunit Hsp60, which function as a back-to-back double ring. In a cyclic reaction, Hsp60 ring complexes bind one unfolded substrate protein per ring, followed by the binding of ATP and association with 2 heptameric rings of the co-chaperonin Hsp10. This leads to sequestration of the substrate protein in the inner cavity of Hsp60 where, for a certain period of time, it can fold undisturbed by other cell components. Synchronous hydrolysis of ATP in all Hsp60 subunits results in the dissociation of the chaperonin rings and the release of ADP and the folded substrate protein. The polypeptide is 10 kDa heat shock protein, mitochondrial (Hspe1) (Rattus norvegicus (Rat)).